Reading from the N-terminus, the 301-residue chain is UDP-N-acetylenolpyruvoylglucosamine reductase (301 aa).

An FAD-binding PCMH-type domain is found at 30-194 (VGGEADYLVF…LSVKFALAPG (165 aa)). The active site involves arginine 173. Catalysis depends on serine 223, which acts as the Proton donor. Glutamate 293 is an active-site residue.

The protein belongs to the MurB family. The cofactor is FAD.

Its subcellular location is the cytoplasm. It carries out the reaction UDP-N-acetyl-alpha-D-muramate + NADP(+) = UDP-N-acetyl-3-O-(1-carboxyvinyl)-alpha-D-glucosamine + NADPH + H(+). It functions in the pathway cell wall biogenesis; peptidoglycan biosynthesis. Its function is as follows. Cell wall formation. The protein is UDP-N-acetylenolpyruvoylglucosamine reductase of Streptococcus pneumoniae (strain Hungary19A-6).